The chain runs to 667 residues: Probable export ATP-binding/permease protein MacB (667 aa).

The region spanning Leu-22–Glu-260 is the ABC transporter domain. Gly-58–Ser-65 provides a ligand contact to ATP. Helical transmembrane passes span Leu-292–Gly-312, Leu-540–Met-560, Ile-601–Val-621, and Leu-630–Val-650.

This sequence belongs to the ABC transporter superfamily. Macrolide exporter (TC 3.A.1.122) family. Probably part of a tripartite efflux system, which is composed of an inner membrane transporter, a periplasmic membrane fusion protein, and an outer membrane component.

It is found in the cell inner membrane. In terms of biological role, probably part of a tripartite efflux system. This chain is Probable export ATP-binding/permease protein MacB, found in Pseudomonas entomophila (strain L48).